Consider the following 121-residue polypeptide: Alpha-endosulfine (121 aa).

Positions 1-53 are disordered; the sequence is MSQKQEEENPAEETGEEKQDTQEKEGILPERAEEAKLKAKYPSLGQKPGGSDF. The residue at position 2 (S2) is an N-acetylserine. S2 is modified (phosphoserine). The segment covering 16–37 has biased composition (basic and acidic residues); it reads EEKQDTQEKEGILPERAEEAKL. T21 bears the Phosphothreonine mark. Phosphoserine is present on S43. At S67 the chain carries Phosphoserine; by GWL. A disordered region spans residues 79–121; that stretch reads NKQLPSAGPDKNLVTGDHIPTPQDLPQRKSSLVTSKLAGGQVE. S109 carries the post-translational modification Phosphoserine; by PKA.

This sequence belongs to the endosulfine family. In terms of assembly, interacts (when phosphorylated at Ser-67) with PPP2R2D. Interacts with ABCC8. Interacts with SNCA; interaction is disrupted when phosphorylated at Ser-109. Post-translationally, phosphorylation at Ser-67 by GWL during mitosis is essential for interaction with PPP2R2D (PR55-delta) and subsequent inactivation of PP2A. Phosphorylated by PKA. As to expression, widely expressed with high levels in skeletal muscle and brain and lower levels in the pancreas.

It is found in the cytoplasm. Its function is as follows. Protein phosphatase inhibitor that specifically inhibits protein phosphatase 2A (PP2A) during mitosis. When phosphorylated at Ser-67 during mitosis, specifically interacts with PPP2R2D (PR55-delta) and inhibits its activity, leading to inactivation of PP2A, an essential condition to keep cyclin-B1-CDK1 activity high during M phase. Also acts as a stimulator of insulin secretion by interacting with sulfonylurea receptor (ABCC8), thereby preventing sulfonylurea from binding to its receptor and reducing K(ATP) channel currents. This is Alpha-endosulfine (ENSA) from Homo sapiens (Human).